Reading from the N-terminus, the 174-residue chain is Protein GrpE (174 aa).

This sequence belongs to the GrpE family. Homodimer.

The protein localises to the cytoplasm. Functionally, participates actively in the response to hyperosmotic and heat shock by preventing the aggregation of stress-denatured proteins, in association with DnaK and GrpE. It is the nucleotide exchange factor for DnaK and may function as a thermosensor. Unfolded proteins bind initially to DnaJ; upon interaction with the DnaJ-bound protein, DnaK hydrolyzes its bound ATP, resulting in the formation of a stable complex. GrpE releases ADP from DnaK; ATP binding to DnaK triggers the release of the substrate protein, thus completing the reaction cycle. Several rounds of ATP-dependent interactions between DnaJ, DnaK and GrpE are required for fully efficient folding. This is Protein GrpE from Methanothermobacter thermautotrophicus (strain ATCC 29096 / DSM 1053 / JCM 10044 / NBRC 100330 / Delta H) (Methanobacterium thermoautotrophicum).